Here is a 123-residue protein sequence, read N- to C-terminus: UPF0102 protein Pcar_2217 (123 aa).

Belongs to the UPF0102 family.

This is UPF0102 protein Pcar_2217 from Syntrophotalea carbinolica (strain DSM 2380 / NBRC 103641 / GraBd1) (Pelobacter carbinolicus).